Consider the following 476-residue polypeptide: Lactate utilization protein B 1 (476 aa).

4Fe-4S ferredoxin-type domains are found at residues 301–331 (GTEF…GHAY) and 350–379 (YDEY…LHDL). Residues C310, C313, C316, C320, C363, C366, and C370 each contribute to the [4Fe-4S] cluster site.

The protein belongs to the LutB/YkgF family.

Functionally, is involved in L-lactate degradation and allows cells to grow with lactate as the sole carbon source. Has probably a role as an electron transporter during oxidation of L-lactate. In Bacillus mycoides (strain KBAB4) (Bacillus weihenstephanensis), this protein is Lactate utilization protein B 1.